A 382-amino-acid chain; its full sequence is Na(+)/H(+) antiporter NhaA (382 aa).

A run of 10 helical transmembrane segments spans residues 5–25, 42–62, 88–108, 116–136, 145–165, 169–189, 261–281, 282–302, 327–347, and 353–373; these read INLL…ALAW, FGGV…FFGI, LATL…NAVI, GWGI…RLVF, FLLL…AVFY, VHPT…AAYI, IVVD…RFSS, VGTA…AGIL, TGLV…VAFV, and GAAK…VALG.

This sequence belongs to the NhaA Na(+)/H(+) (TC 2.A.33) antiporter family.

It is found in the cell inner membrane. It carries out the reaction Na(+)(in) + 2 H(+)(out) = Na(+)(out) + 2 H(+)(in). Functionally, na(+)/H(+) antiporter that extrudes sodium in exchange for external protons. The protein is Na(+)/H(+) antiporter NhaA of Geobacter metallireducens (strain ATCC 53774 / DSM 7210 / GS-15).